Reading from the N-terminus, the 332-residue chain is GLIPR1-like protein 2 (332 aa).

In terms of domain architecture, SCP spans 57–191; the sequence is LHNELRGTVF…THAALFICNY (135 aa). Residue N145 is glycosylated (N-linked (GlcNAc...) asparagine). Residues 253–273 traverse the membrane as a helical segment; the sequence is IFILFLRVASLLLCVIVVLIV. A disordered region spans residues 293–332; the sequence is EGKTEVEIVMEEGEGEGEGGEGEGEGEEKEEEEMLEEDEQ. Residues 300 to 332 are compositionally biased toward acidic residues; that stretch reads IVMEEGEGEGEGGEGEGEGEEKEEEEMLEEDEQ.

This sequence belongs to the CRISP family.

Its subcellular location is the membrane. This is GLIPR1-like protein 2 (Glipr1l2) from Mus musculus (Mouse).